A 443-amino-acid polypeptide reads, in one-letter code: Ribosomal protein uS12 methylthiotransferase RimO (443 aa).

One can recognise an MTTase N-terminal domain in the interval 5–115 (PNIGFISLGC…VMKHVHKYVP (111 aa)). [4Fe-4S] cluster contacts are provided by Cys14, Cys50, Cys79, Cys147, Cys151, and Cys154. A Radical SAM core domain is found at 133-374 (LTPKHYAYLK…MQVQQRISAA (242 aa)). The TRAM domain maps to 377 to 443 (QQKVGKTLAV…ADEYDLWGTC (67 aa)).

Belongs to the methylthiotransferase family. RimO subfamily. The cofactor is [4Fe-4S] cluster.

Its subcellular location is the cytoplasm. The catalysed reaction is L-aspartate(89)-[ribosomal protein uS12]-hydrogen + (sulfur carrier)-SH + AH2 + 2 S-adenosyl-L-methionine = 3-methylsulfanyl-L-aspartate(89)-[ribosomal protein uS12]-hydrogen + (sulfur carrier)-H + 5'-deoxyadenosine + L-methionine + A + S-adenosyl-L-homocysteine + 2 H(+). Functionally, catalyzes the methylthiolation of an aspartic acid residue of ribosomal protein uS12. This is Ribosomal protein uS12 methylthiotransferase RimO from Actinobacillus pleuropneumoniae serotype 7 (strain AP76).